Consider the following 345-residue polypeptide: Holliday junction branch migration complex subunit RuvB (345 aa).

Positions 1–183 are large ATPase domain (RuvB-L); sequence MTTQRLVSAA…FGIVHRLEFY (183 aa). ATP is bound by residues Ile22, Arg23, Gly64, Lys67, Thr68, Thr69, 130–132, Arg173, Tyr183, and Arg220; that span reads EDY. Mg(2+) is bound at residue Thr68. A small ATPAse domain (RuvB-S) region spans residues 184–254; sequence SVEELSRIVA…VAGKALEMLD (71 aa). The segment at 257–345 is head domain (RuvB-H); the sequence is PNGFDQSDRR…NVNEELFGDE (89 aa). Residues Arg293, Arg312, and Arg317 each coordinate DNA.

It belongs to the RuvB family. In terms of assembly, homohexamer. Forms an RuvA(8)-RuvB(12)-Holliday junction (HJ) complex. HJ DNA is sandwiched between 2 RuvA tetramers; dsDNA enters through RuvA and exits via RuvB. An RuvB hexamer assembles on each DNA strand where it exits the tetramer. Each RuvB hexamer is contacted by two RuvA subunits (via domain III) on 2 adjacent RuvB subunits; this complex drives branch migration. In the full resolvosome a probable DNA-RuvA(4)-RuvB(12)-RuvC(2) complex forms which resolves the HJ.

Its subcellular location is the cytoplasm. It carries out the reaction ATP + H2O = ADP + phosphate + H(+). Functionally, the RuvA-RuvB-RuvC complex processes Holliday junction (HJ) DNA during genetic recombination and DNA repair, while the RuvA-RuvB complex plays an important role in the rescue of blocked DNA replication forks via replication fork reversal (RFR). RuvA specifically binds to HJ cruciform DNA, conferring on it an open structure. The RuvB hexamer acts as an ATP-dependent pump, pulling dsDNA into and through the RuvAB complex. RuvB forms 2 homohexamers on either side of HJ DNA bound by 1 or 2 RuvA tetramers; 4 subunits per hexamer contact DNA at a time. Coordinated motions by a converter formed by DNA-disengaged RuvB subunits stimulates ATP hydrolysis and nucleotide exchange. Immobilization of the converter enables RuvB to convert the ATP-contained energy into a lever motion, pulling 2 nucleotides of DNA out of the RuvA tetramer per ATP hydrolyzed, thus driving DNA branch migration. The RuvB motors rotate together with the DNA substrate, which together with the progressing nucleotide cycle form the mechanistic basis for DNA recombination by continuous HJ branch migration. Branch migration allows RuvC to scan DNA until it finds its consensus sequence, where it cleaves and resolves cruciform DNA. The chain is Holliday junction branch migration complex subunit RuvB from Methylococcus capsulatus (strain ATCC 33009 / NCIMB 11132 / Bath).